Here is a 112-residue protein sequence, read N- to C-terminus: Protein FAM32A (112 aa).

The interval 15–35 is disordered; it reads KGCGDMSLGKKKKKKNKANDQ.

The protein belongs to the FAM32 family.

It localises to the nucleus. Its function is as follows. May induce G2 arrest and apoptosis. May also increase cell sensitivity to apoptotic stimuli. The chain is Protein FAM32A (fam32a) from Xenopus tropicalis (Western clawed frog).